Consider the following 87-residue polypeptide: Cytochrome c5 (87 aa).

Heme-binding residues include Cys19, Cys22, His23, and Met63. An intrachain disulfide couples Cys69 to Cys72.

This sequence belongs to the cytochrome c family. In terms of assembly, homodimer. In terms of processing, binds 1 heme group per subunit.

In terms of biological role, it is unreactive with cytochrome c reductase or oxidase but seems to function as an intermediate in nitrate respiration of facultative anaerobic pseudmonads. This is Cytochrome c5 from Ectopseudomonas mendocina (Pseudomonas mendocina).